The sequence spans 412 residues: Peptide chain release factor subunit 1 (412 aa).

Belongs to the eukaryotic release factor 1 family. As to quaternary structure, heterodimer of two subunits, one of which binds GTP.

It is found in the cytoplasm. In terms of biological role, directs the termination of nascent peptide synthesis (translation) in response to the termination codons UAA, UAG and UGA. The sequence is that of Peptide chain release factor subunit 1 from Methanobrevibacter smithii (strain ATCC 35061 / DSM 861 / OCM 144 / PS).